The primary structure comprises 511 residues: Bifunctional purine biosynthesis protein PurH (511 aa).

Positions 1–145 constitute an MGS-like domain; sequence MKKRALVSVS…KNHQFVSVIV (145 aa).

It belongs to the PurH family.

The enzyme catalyses (6R)-10-formyltetrahydrofolate + 5-amino-1-(5-phospho-beta-D-ribosyl)imidazole-4-carboxamide = 5-formamido-1-(5-phospho-D-ribosyl)imidazole-4-carboxamide + (6S)-5,6,7,8-tetrahydrofolate. It catalyses the reaction IMP + H2O = 5-formamido-1-(5-phospho-D-ribosyl)imidazole-4-carboxamide. The protein operates within purine metabolism; IMP biosynthesis via de novo pathway; 5-formamido-1-(5-phospho-D-ribosyl)imidazole-4-carboxamide from 5-amino-1-(5-phospho-D-ribosyl)imidazole-4-carboxamide (10-formyl THF route): step 1/1. It participates in purine metabolism; IMP biosynthesis via de novo pathway; IMP from 5-formamido-1-(5-phospho-D-ribosyl)imidazole-4-carboxamide: step 1/1. This Bacillus cereus (strain G9842) protein is Bifunctional purine biosynthesis protein PurH.